The primary structure comprises 431 residues: Adenylosuccinate synthetase (431 aa).

Residues 12-18 (GDEGKGK) and 40-42 (GHS) contribute to the GTP site. Catalysis depends on D13, which acts as the Proton acceptor. Residues D13 and G40 each contribute to the Mg(2+) site. Residues 13–16 (DEGK) and 38–41 (NAGH) each bind IMP. Catalysis depends on H41, which acts as the Proton donor. The disordered stretch occupies residues 114–133 (QQQERDRSKNGEKIGTTNKG). The span at 115 to 125 (QQERDRSKNGE) shows a compositional bias: basic and acidic residues. Residues T130, R144, Q225, T240, and R304 each coordinate IMP. Substrate is bound at residue 300–306 (TVTKRPR). Residues R306, 332-334 (CLD), and 414-416 (SIG) each bind GTP.

The protein belongs to the adenylosuccinate synthetase family. In terms of assembly, homodimer. The cofactor is Mg(2+).

The protein localises to the cytoplasm. The enzyme catalyses IMP + L-aspartate + GTP = N(6)-(1,2-dicarboxyethyl)-AMP + GDP + phosphate + 2 H(+). Its pathway is purine metabolism; AMP biosynthesis via de novo pathway; AMP from IMP: step 1/2. Its function is as follows. Plays an important role in the de novo pathway of purine nucleotide biosynthesis. Catalyzes the first committed step in the biosynthesis of AMP from IMP. The protein is Adenylosuccinate synthetase of Pediococcus pentosaceus (strain ATCC 25745 / CCUG 21536 / LMG 10740 / 183-1w).